The following is a 131-amino-acid chain: Heat shock protein 15 homolog (131 aa).

Residues 6-67 (VRLDKWLWAA…NEEKEIKIIA (62 aa)) enclose the S4 RNA-binding domain. The disordered stretch occupies residues 98–131 (ARKNNSLSMPHPDRRPNKKERRDLLKFKHQDKFE). Positions 108–131 (HPDRRPNKKERRDLLKFKHQDKFE) are enriched in basic and acidic residues.

It belongs to the HSP15 family.

Involved in the recycling of free 50S ribosomal subunits that still carry a nascent chain. Binds RNA more specifically than DNA. Binds with very high affinity to the free 50S ribosomal subunit. Does not bind it when it is part of the 70S ribosome. The polypeptide is Heat shock protein 15 homolog (hslR) (Haemophilus influenzae (strain ATCC 51907 / DSM 11121 / KW20 / Rd)).